The primary structure comprises 497 residues: Maintenance of mitochondrial morphology protein 1 (497 aa).

Residues 1-28 (MSSVLNPSSPHSWDLCCSSSSNRSYHRP) are Lumenal-facing. Residues 29–55 (THPIVGLLVGQLSVVLLIGAFIKFFIF) traverse the membrane as a helical segment. Residues 56–497 (GEAPPSPSRS…GSLPDAVPIT (442 aa)) are Cytoplasmic-facing. Disordered stretches follow at residues 60–107 (PSPS…SSST), 284–330 (ESST…STTG), 402–421 (TGVRGQEEQPDVSSSDAAGV), and 437–497 (EMLH…VPIT). Basic residues predominate over residues 66–77 (QTHRTSQHKRSY). Basic and acidic residues predominate over residues 81–94 (GARDLSPRTLKEKP). Polar residues-rich tracts occupy residues 95-107 (SSNVLRPVPSSST), 284-302 (ESSTNLTPTSSNIDTNLRS), and 311-330 (PQESSTTDEGSQGGATSTTG). One can recognise an SMP-LTD domain in the interval 140–393 (QPESLDWFNV…EPRVQVVALP (254 aa)). Residues 412 to 421 (DVSSSDAAGV) show a composition bias toward low complexity. The span at 440–451 (HAAREVDAEGLR) shows a compositional bias: basic and acidic residues. A compositionally biased stretch (polar residues) spans 462–473 (GSSSKYAQQNQS). The span at 474–484 (SRERGRADDPF) shows a compositional bias: basic and acidic residues.

Belongs to the MMM1 family. As to quaternary structure, homodimer. Component of the ER-mitochondria encounter structure (ERMES) or MDM complex, composed of MMM1, MDM10, MDM12 and MDM34. An MMM1 homodimer associates with one molecule of MDM12 on each side in a pairwise head-to-tail manner, and the SMP-LTD domains of MMM1 and MDM12 generate a continuous hydrophobic tunnel for phospholipid trafficking.

Its subcellular location is the endoplasmic reticulum membrane. Functionally, component of the ERMES/MDM complex, which serves as a molecular tether to connect the endoplasmic reticulum (ER) and mitochondria. Components of this complex are involved in the control of mitochondrial shape and protein biogenesis, and function in nonvesicular lipid trafficking between the ER and mitochondria. The MDM12-MMM1 subcomplex functions in the major beta-barrel assembly pathway that is responsible for biogenesis of all outer membrane beta-barrel proteins, and acts in a late step after the SAM complex. The MDM10-MDM12-MMM1 subcomplex further acts in the TOM40-specific pathway after the action of the MDM12-MMM1 complex. Essential for establishing and maintaining the structure of mitochondria and maintenance of mtDNA nucleoids. The chain is Maintenance of mitochondrial morphology protein 1 from Uncinocarpus reesii (strain UAMH 1704).